Here is a 398-residue protein sequence, read N- to C-terminus: Succinate--CoA ligase [ADP-forming] subunit beta (398 aa).

The ATP-grasp domain occupies Lys-9–Glu-254. ATP-binding positions include Lys-46, Gly-53–Gly-55, Glu-109, Ser-112, and Glu-117. Positions 209 and 223 each coordinate Mg(2+). Residues Asn-274 and Gly-331–Met-333 each bind substrate.

The protein belongs to the succinate/malate CoA ligase beta subunit family. As to quaternary structure, heterotetramer of two alpha and two beta subunits. It depends on Mg(2+) as a cofactor.

It catalyses the reaction succinate + ATP + CoA = succinyl-CoA + ADP + phosphate. The catalysed reaction is GTP + succinate + CoA = succinyl-CoA + GDP + phosphate. It participates in carbohydrate metabolism; tricarboxylic acid cycle; succinate from succinyl-CoA (ligase route): step 1/1. Succinyl-CoA synthetase functions in the citric acid cycle (TCA), coupling the hydrolysis of succinyl-CoA to the synthesis of either ATP or GTP and thus represents the only step of substrate-level phosphorylation in the TCA. The beta subunit provides nucleotide specificity of the enzyme and binds the substrate succinate, while the binding sites for coenzyme A and phosphate are found in the alpha subunit. The polypeptide is Succinate--CoA ligase [ADP-forming] subunit beta (Bradyrhizobium sp. (strain ORS 278)).